We begin with the raw amino-acid sequence, 720 residues long: Hexanoyl-CoA synthase (720 aa).

The chain crosses the membrane as a helical span at residues 242–262; it reads VDAVVIYLAIVLAGYVVVSIA. 290–293 provides a ligand contact to CoA; the sequence is RGKK. ATP is bound by residues 477–479, 499–504, glutamate 585, and arginine 607; these read GEA and EMCGGT. A CoA-binding site is contributed by glycine 615. Lysine 618 contributes to the ATP binding site. Glutamine 681 contributes to the CoA binding site.

The protein belongs to the ATP-dependent AMP-binding enzyme family. Mg(2+) is required as a cofactor. As to expression, accumulates in glandular trichomes, especially in female flowers. Present at low levels in roots, stems and leaves.

It is found in the cytoplasm. Its subcellular location is the cytosol. The protein resides in the membrane. The catalysed reaction is hexanoate + ATP + CoA = hexanoyl-CoA + AMP + diphosphate. It functions in the pathway secondary metabolite biosynthesis; terpenoid biosynthesis. Inhibitied by high CoA concentrations. Involved in the biosynthesis of cannabinoids-related terpenophenolic natural products, which have pharmacological activity. Acyl-activating enzyme that catalyzes the conversion of hexanoic acid to hexanoyl-CoA, precursor of the cannabinoid pathway. Can also activate other fatty acids including heptanoate, octanoate and nonanoate. The polypeptide is Hexanoyl-CoA synthase (Cannabis sativa (Hemp)).